Reading from the N-terminus, the 420-residue chain is Probable secreted beta-glucosidase SUN4 (420 aa).

The signal sequence occupies residues M1 to P24. The disordered stretch occupies residues T89–A145. N395 is a glycosylation site (N-linked (GlcNAc...) asparagine).

It belongs to the SUN family. Post-translationally, glycosylated.

The protein localises to the secreted. The protein resides in the cell wall. In terms of biological role, involved in the remodeling of the cell wall during the various phases of yeast culture development and under various environmental conditions and plays a role in septation. The sequence is that of Probable secreted beta-glucosidase SUN4 (SUN4) from Saccharomyces cerevisiae (strain ATCC 204508 / S288c) (Baker's yeast).